A 395-amino-acid polypeptide reads, in one-letter code: E3 ubiquitin-protein ligase NHLRC1 (395 aa).

The segment at 26–72 adopts an RING-type zinc-finger fold; sequence CKVCFEKFGHRQQRRPRNLSCGHVVCLACVAALAHPRTLALECPFCR. NHL repeat units lie at residues 113-157, 161-204, 205-245, 248-300, 301-349, and 350-393; these read ALTC…FDSG, AHQF…FDFF, GQIK…LDVD, EGVL…FSSS, MQLV…LGKP, and EEFP…YKVD.

Interacts with AGL. Interacts (via the NHL repeats) with EPM2A/laforin. Forms a complex with EPM2A/laforin and HSP70. Interacts with PRDM8. Expressed in brain, cerebellum, spinal cord, medulla, heart, liver, skeletal muscle and pancreas.

Its subcellular location is the endoplasmic reticulum. The protein resides in the nucleus. It carries out the reaction S-ubiquitinyl-[E2 ubiquitin-conjugating enzyme]-L-cysteine + [acceptor protein]-L-lysine = [E2 ubiquitin-conjugating enzyme]-L-cysteine + N(6)-ubiquitinyl-[acceptor protein]-L-lysine.. Its pathway is protein modification; protein ubiquitination. Its function is as follows. E3 ubiquitin-protein ligase. Together with the phosphatase EPM2A/laforin, appears to be involved in the clearance of toxic polyglucosan and protein aggregates via multiple pathways. In complex with EPM2A/laforin and HSP70, suppresses the cellular toxicity of misfolded proteins by promoting their degradation through the ubiquitin-proteasome system (UPS). Ubiquitinates the glycogen-targeting protein phosphatase subunits PPP1R3C/PTG and PPP1R3D in a laforin-dependent manner and targets them for proteasome-dependent degradation, thus decreasing glycogen accumulation. Polyubiquitinates EPM2A/laforin and ubiquitinates AGL and targets them for proteasome-dependent degradation. Also promotes proteasome-independent protein degradation through the macroautophagy pathway. The chain is E3 ubiquitin-protein ligase NHLRC1 (NHLRC1) from Homo sapiens (Human).